The following is a 232-amino-acid chain: ATP-dependent dethiobiotin synthetase BioD (232 aa).

16–21 (GVGKTV) lines the ATP pocket. Residue T20 participates in Mg(2+) binding. K41 is a catalytic residue. T45 serves as a coordination point for substrate. ATP-binding positions include D52, 111 to 114 (EGIG), 171 to 172 (NQ), 200 to 202 (PLS), and E207. 2 residues coordinate Mg(2+): D52 and E111.

It belongs to the dethiobiotin synthetase family. In terms of assembly, homodimer. Requires Mg(2+) as cofactor.

It is found in the cytoplasm. It catalyses the reaction (7R,8S)-7,8-diammoniononanoate + CO2 + ATP = (4R,5S)-dethiobiotin + ADP + phosphate + 3 H(+). The enzyme catalyses (7R,8S)-8-amino-7-(carboxyamino)nonanoate + ATP = (4R,5S)-dethiobiotin + ADP + phosphate + H(+). It participates in cofactor biosynthesis; biotin biosynthesis; biotin from 7,8-diaminononanoate: step 1/2. Its function is as follows. Catalyzes a mechanistically unusual reaction, the ATP-dependent insertion of CO2 between the N7 and N8 nitrogen atoms of 7,8-diaminopelargonic acid (DAPA, also called 7,8-diammoniononanoate) to form a ureido ring. This archaea does not encode bioA (which catalyzes the formation of the precursor for this reaction in the cannonical pathway), instead it encodes bioU, which replaces bioA and also performs the first half of the cannonical BioD reaction. Thus in this archaea BioD has a different substrate. The polypeptide is ATP-dependent dethiobiotin synthetase BioD (Haloferax mediterranei (strain ATCC 33500 / DSM 1411 / JCM 8866 / NBRC 14739 / NCIMB 2177 / R-4) (Halobacterium mediterranei)).